The chain runs to 309 residues: Tagatose-6-phosphate kinase (309 aa).

It belongs to the carbohydrate kinase PfkB family. LacC subfamily.

It carries out the reaction D-tagatofuranose 6-phosphate + ATP = D-tagatofuranose 1,6-bisphosphate + ADP + H(+). Its pathway is carbohydrate metabolism; D-tagatose 6-phosphate degradation; D-glyceraldehyde 3-phosphate and glycerone phosphate from D-tagatose 6-phosphate: step 1/2. The sequence is that of Tagatose-6-phosphate kinase from Streptococcus pyogenes serotype M28 (strain MGAS6180).